Consider the following 273-residue polypeptide: Putative pyruvate, phosphate dikinase regulatory protein (273 aa).

An ADP-binding site is contributed by 153 to 160 (GVSRTSKS).

The protein belongs to the pyruvate, phosphate/water dikinase regulatory protein family. PDRP subfamily.

It carries out the reaction N(tele)-phospho-L-histidyl/L-threonyl-[pyruvate, phosphate dikinase] + ADP = N(tele)-phospho-L-histidyl/O-phospho-L-threonyl-[pyruvate, phosphate dikinase] + AMP + H(+). The catalysed reaction is N(tele)-phospho-L-histidyl/O-phospho-L-threonyl-[pyruvate, phosphate dikinase] + phosphate + H(+) = N(tele)-phospho-L-histidyl/L-threonyl-[pyruvate, phosphate dikinase] + diphosphate. In terms of biological role, bifunctional serine/threonine kinase and phosphorylase involved in the regulation of the pyruvate, phosphate dikinase (PPDK) by catalyzing its phosphorylation/dephosphorylation. In Ehrlichia ruminantium (strain Gardel), this protein is Putative pyruvate, phosphate dikinase regulatory protein.